An 82-amino-acid polypeptide reads, in one-letter code: UPF0180 protein BAA_1480 (82 aa).

It belongs to the UPF0180 family.

The protein is UPF0180 protein BAA_1480 of Bacillus anthracis (strain A0248).